We begin with the raw amino-acid sequence, 264 residues long: 4-hydroxy-tetrahydrodipicolinate reductase (264 aa).

9–14 (GCSGRM) contributes to the NAD(+) binding site. R36 contributes to the NADP(+) binding site. NAD(+) contacts are provided by residues 100 to 102 (GTT) and 121 to 124 (SANM). H154 acts as the Proton donor/acceptor in catalysis. H155 contributes to the (S)-2,3,4,5-tetrahydrodipicolinate binding site. K158 serves as the catalytic Proton donor. Residue 164–165 (GT) participates in (S)-2,3,4,5-tetrahydrodipicolinate binding.

The protein belongs to the DapB family.

It is found in the cytoplasm. It carries out the reaction (S)-2,3,4,5-tetrahydrodipicolinate + NAD(+) + H2O = (2S,4S)-4-hydroxy-2,3,4,5-tetrahydrodipicolinate + NADH + H(+). It catalyses the reaction (S)-2,3,4,5-tetrahydrodipicolinate + NADP(+) + H2O = (2S,4S)-4-hydroxy-2,3,4,5-tetrahydrodipicolinate + NADPH + H(+). It functions in the pathway amino-acid biosynthesis; L-lysine biosynthesis via DAP pathway; (S)-tetrahydrodipicolinate from L-aspartate: step 4/4. Catalyzes the conversion of 4-hydroxy-tetrahydrodipicolinate (HTPA) to tetrahydrodipicolinate. This is 4-hydroxy-tetrahydrodipicolinate reductase from Wolbachia sp. subsp. Brugia malayi (strain TRS).